Reading from the N-terminus, the 146-residue chain is Hemoglobin subunit beta-2 (146 aa).

Positions H2–H146 constitute a Globin domain. H63 and H92 together coordinate heme b.

Belongs to the globin family. In terms of assembly, heterotetramer of two alpha chains and two beta chains. Red blood cells.

Functionally, involved in oxygen transport from the lung to the various peripheral tissues. This Naja naja (Indian cobra) protein is Hemoglobin subunit beta-2 (HBB2).